A 160-amino-acid polypeptide reads, in one-letter code: MSQSKQYVMTYEGVKKLESELEYLKTVKRKEITEKIKIALGYGDLSENSEYDEAKNDQAFTEGRIIQLENMLKNAVVVDESEIPSDIVSVGSKVKVKDYEFDEEVEYSIVGSAEADPMNFKISNESPVGNALVGKKVGDVVEVTVPDGVNKFEILGISRS.

A coiled-coil region spans residues 49-75 (SEYDEAKNDQAFTEGRIIQLENMLKNA).

The protein belongs to the GreA/GreB family.

Necessary for efficient RNA polymerase transcription elongation past template-encoded arresting sites. The arresting sites in DNA have the property of trapping a certain fraction of elongating RNA polymerases that pass through, resulting in locked ternary complexes. Cleavage of the nascent transcript by cleavage factors such as GreA or GreB allows the resumption of elongation from the new 3'terminus. GreA releases sequences of 2 to 3 nucleotides. The polypeptide is Transcription elongation factor GreA (Clostridium beijerinckii (strain ATCC 51743 / NCIMB 8052) (Clostridium acetobutylicum)).